Consider the following 327-residue polypeptide: Beta-ketoacyl-[acyl-carrier-protein] synthase III (327 aa).

Catalysis depends on residues Cys114 and His254. Residues 255–259 (QANRR) form an ACP-binding region. Asn284 is an active-site residue.

It belongs to the thiolase-like superfamily. FabH family. As to quaternary structure, homodimer.

It is found in the cytoplasm. It carries out the reaction malonyl-[ACP] + acetyl-CoA + H(+) = 3-oxobutanoyl-[ACP] + CO2 + CoA. It participates in lipid metabolism; fatty acid biosynthesis. Its function is as follows. Catalyzes the condensation reaction of fatty acid synthesis by the addition to an acyl acceptor of two carbons from malonyl-ACP. Catalyzes the first condensation reaction which initiates fatty acid synthesis and may therefore play a role in governing the total rate of fatty acid production. Possesses both acetoacetyl-ACP synthase and acetyl transacylase activities. Its substrate specificity determines the biosynthesis of branched-chain and/or straight-chain of fatty acids. The sequence is that of Beta-ketoacyl-[acyl-carrier-protein] synthase III from Lactobacillus helveticus (strain DPC 4571).